A 523-amino-acid polypeptide reads, in one-letter code: REST corepressor 2 (523 aa).

The segment at 1 to 43 (MPSVMEKPSAGSGILSRSRAKTAPNGGQPHSEDDSSEEEHSHD) is disordered. Over residues 30 to 43 (HSEDDSSEEEHSHD) the composition is skewed to basic and acidic residues. Residues Ser-31, Ser-35, Ser-36, and Ser-63 each carry the phosphoserine modification. The ELM2 domain occupies 44-129 (SMIRVGTNYQ…KSLADLANFT (86 aa)). Lys-88 participates in a covalent cross-link: Glycyl lysine isopeptide (Lys-Gly) (interchain with G-Cter in SUMO2). Residues 130–181 (PFPDEWTVEDKVLFEQAFGFHGKCFQRIQQMLPDKVIPSLVKYYYSWKKTRS) form the SANT 1 domain. A disordered region spans residues 185-244 (VMDRQARRLGGRKDKEDSDELEEGRGAVSEGEPDTGDPKREPLPSRPLNARPGPGKKEVQ). Position 202 is a phosphoserine (Ser-202). Residues 283–314 (TLRGLDSQLISLKRQVQSMKQTNSSLRQALEG) are a coiled coil. An SANT 2 domain is found at 327–378 (KFNSRWTTDEQLLAVQAIRRYGKDFGAIAEVIGNKTLTQVKTFFVSYRRRFN). The segment at 387–523 (EAEQDGAPAA…APLEPPAPSL (137 aa)) is disordered. Residues 432–459 (SVPPAPPPPPPPTSLSQPPPLLRPPLPT) are compositionally biased toward pro residues. Residues 460–482 (APTLLRQPPPLQQGRFLQPRLAP) are compositionally biased toward low complexity. Residue Arg-479 is modified to Asymmetric dimethylarginine. Pro residues predominate over residues 504–523 (GPQPPPTLVGAPLEPPAPSL).

It belongs to the CoREST family. Predominantly, but not exclusively, expressed in neural tissue. Strongly expressed in neural domains of the developing brain of the developing mouse CNS.

The protein localises to the nucleus. In terms of biological role, may act as a component of a corepressor complex that represses transcription. The polypeptide is REST corepressor 2 (Rcor2) (Mus musculus (Mouse)).